A 94-amino-acid polypeptide reads, in one-letter code: Myosuppressin (94 aa).

A signal peptide spans 1-24 (MMSPTLMILISITTMAILSGESFG). The propeptide occupies 25 to 80 (AMPAQCNSEFLEELPPRLRKICVAIARIWDAREMNDFVDDREYRENLPRYDSSVKR). A Pyrrolidone carboxylic acid modification is found at Q81. The residue at position 90 (F90) is a Phenylalanine amide.

As to expression, expressed throughout the nervous system (at protein level).

The protein resides in the secreted. Functionally, myoinhibiting neuropeptide. This chain is Myosuppressin, found in Camponotus floridanus (Florida carpenter ant).